A 341-amino-acid chain; its full sequence is Glucokinase (341 aa).

Position 18-23 (18-23) interacts with ATP; it reads GDIGGT.

The protein belongs to the bacterial glucokinase family.

Its subcellular location is the cytoplasm. The enzyme catalyses D-glucose + ATP = D-glucose 6-phosphate + ADP + H(+). The sequence is that of Glucokinase from Rhizobium etli (strain ATCC 51251 / DSM 11541 / JCM 21823 / NBRC 15573 / CFN 42).